A 331-amino-acid polypeptide reads, in one-letter code: Beta-ketoacyl-[acyl-carrier-protein] synthase III (331 aa).

Active-site residues include C116 and H256. The interval 257–261 (QANTR) is ACP-binding. N286 is an active-site residue.

Belongs to the thiolase-like superfamily. FabH family. Homodimer.

Its subcellular location is the cytoplasm. The enzyme catalyses malonyl-[ACP] + acetyl-CoA + H(+) = 3-oxobutanoyl-[ACP] + CO2 + CoA. It participates in lipid metabolism; fatty acid biosynthesis. In terms of biological role, catalyzes the condensation reaction of fatty acid synthesis by the addition to an acyl acceptor of two carbons from malonyl-ACP. Catalyzes the first condensation reaction which initiates fatty acid synthesis and may therefore play a role in governing the total rate of fatty acid production. Possesses both acetoacetyl-ACP synthase and acetyl transacylase activities. Its substrate specificity determines the biosynthesis of branched-chain and/or straight-chain of fatty acids. The sequence is that of Beta-ketoacyl-[acyl-carrier-protein] synthase III from Caldanaerobacter subterraneus subsp. tengcongensis (strain DSM 15242 / JCM 11007 / NBRC 100824 / MB4) (Thermoanaerobacter tengcongensis).